Consider the following 352-residue polypeptide: Histidinol-phosphate aminotransferase (352 aa).

Position 211 is an N6-(pyridoxal phosphate)lysine (lysine 211).

It belongs to the class-II pyridoxal-phosphate-dependent aminotransferase family. Histidinol-phosphate aminotransferase subfamily. Homodimer. Requires pyridoxal 5'-phosphate as cofactor.

It carries out the reaction L-histidinol phosphate + 2-oxoglutarate = 3-(imidazol-4-yl)-2-oxopropyl phosphate + L-glutamate. It functions in the pathway amino-acid biosynthesis; L-histidine biosynthesis; L-histidine from 5-phospho-alpha-D-ribose 1-diphosphate: step 7/9. In Haemophilus influenzae (strain PittEE), this protein is Histidinol-phosphate aminotransferase.